The chain runs to 567 residues: Arginine--tRNA ligase (567 aa).

The 'HIGH' region signature appears at 121–131; the sequence is ANPNGPLHVGH.

The protein belongs to the class-I aminoacyl-tRNA synthetase family.

Its subcellular location is the cytoplasm. It catalyses the reaction tRNA(Arg) + L-arginine + ATP = L-arginyl-tRNA(Arg) + AMP + diphosphate. This chain is Arginine--tRNA ligase, found in Methanosarcina acetivorans (strain ATCC 35395 / DSM 2834 / JCM 12185 / C2A).